The following is a 219-amino-acid chain: MCTTISISISTIKPTEIFQEILGSSYSRKLLFHTHDQSPTPAPSPYVGDNNFDANVVMVLSVLLCALVCSLGLNSIIRCALRCSNLVPSEAGGDNYPVRLTNTGVKRKALKSFQTVSYSTELNLPGLDTECAICLSEFVAEERVKLLPTCHHGFHVRCIDKWLSSHSSCPTCRHCLIQTCEKIADCSQTSSLNSTQPPQDSIILQIAPLEPERWIRWFR.

Residues 57 to 77 (VMVLSVLLCALVCSLGLNSII) form a helical membrane-spanning segment. The segment at 131–173 (CAICLSEFVAEERVKLLPTCHHGFHVRCIDKWLSSHSSCPTCR) adopts an RING-type; atypical zinc-finger fold.

The protein belongs to the RING-type zinc finger family. ATL subfamily.

The protein localises to the membrane. It catalyses the reaction S-ubiquitinyl-[E2 ubiquitin-conjugating enzyme]-L-cysteine + [acceptor protein]-L-lysine = [E2 ubiquitin-conjugating enzyme]-L-cysteine + N(6)-ubiquitinyl-[acceptor protein]-L-lysine.. The protein operates within protein modification; protein ubiquitination. In Arabidopsis thaliana (Mouse-ear cress), this protein is RING-H2 finger protein ATL78 (ATL78).